The primary structure comprises 480 residues: F-box only protein 3 (480 aa).

The region spanning 10-56 (LLTLESLPTDPLLLILSFVDYRDLINCCYVSRRLSQLSTHDPLWRRH) is the F-box domain. One can recognise an ApaG domain in the interval 278–408 (VATTGDITVS…FHMACPTFRV (131 aa)). Residues 419–459 (EYEEMEEEAEEEEEEENDDSADMDESDESDEDENESDEGEG) are compositionally biased toward acidic residues. A disordered region spans residues 419-464 (EYEEMEEEAEEEEEEENDDSADMDESDESDEDENESDEGEGEERRR).

Part of a SCF (SKP1-cullin-F-box) protein ligase complex SCF(FBXO3) consisting of FBXO3, SKP1, CUL1 and RBX1. Interacts with PML, interaction is direct and takes place either alone or within the SCF complex.

Its subcellular location is the nucleus. It functions in the pathway protein modification; protein ubiquitination. Substrate recognition component of the SCF (SKP1-CUL1-F-box protein)-type E3 ubiquitin ligase complex, SCF(FBXO3), which mediates the ubiquitination and subsequent proteasomal degradation of target proteins. Mediates the ubiquitination of HIPK2 and probably that of EP300, leading to rapid degradation by the proteasome. In the presence of PML, HIPK2 ubiquitination still occurs, but degradation is prevented. PML, HIPK2 and FBXO3 may act synergically to activate p53/TP53-dependent transactivation. The SCF(FBXO3) also acts as a regulator of inflammation by mediating ubiquitination and degradation of FBXL2 in response to lipopolysaccharide (LPS). The SCF(FBXO3) complex specifically recognizes FBXL2 phosphorylated at 'Thr-404' and promotes its ubiquitination. This chain is F-box only protein 3 (Fbxo3), found in Rattus norvegicus (Rat).